We begin with the raw amino-acid sequence, 233 residues long: MKTLVICSGGLDSVSLAHITSQKYQLTRLVSFDYGQRHRKELDFARAAATRLGVPFHLIDMRSIGGALSGSALTDDIDVPDGHYAEDTMRITVVPNRNAIMLAIGFGVAAAQGDEAVATAVHGGDHFIYPDCRPGFTRAFETMQRAALDGYADVRLHTPFVEQSKADIVRAGAAHNTPFAETWSCYKGGDIHCGRCGTCVERREAFHLAEVADPTVYADPDYWSAAIAGREAE.

7-17 (CSGGLDSVSLA) is a binding site for ATP. Zn(2+) is bound by residues C185, C193, C196, and C199.

It belongs to the QueC family. It depends on Zn(2+) as a cofactor.

It catalyses the reaction 7-carboxy-7-deazaguanine + NH4(+) + ATP = 7-cyano-7-deazaguanine + ADP + phosphate + H2O + H(+). The protein operates within purine metabolism; 7-cyano-7-deazaguanine biosynthesis. In terms of biological role, catalyzes the ATP-dependent conversion of 7-carboxy-7-deazaguanine (CDG) to 7-cyano-7-deazaguanine (preQ(0)). This is 7-cyano-7-deazaguanine synthase from Ruegeria sp. (strain TM1040) (Silicibacter sp.).